We begin with the raw amino-acid sequence, 190 residues long: Peptidyl-tRNA hydrolase (190 aa).

A tRNA-binding site is contributed by Y14. The active-site Proton acceptor is H19. TRNA-binding residues include Y64, N66, and N112.

Belongs to the PTH family. As to quaternary structure, monomer.

It is found in the cytoplasm. The enzyme catalyses an N-acyl-L-alpha-aminoacyl-tRNA + H2O = an N-acyl-L-amino acid + a tRNA + H(+). Its function is as follows. Hydrolyzes ribosome-free peptidyl-tRNAs (with 1 or more amino acids incorporated), which drop off the ribosome during protein synthesis, or as a result of ribosome stalling. Catalyzes the release of premature peptidyl moieties from peptidyl-tRNA molecules trapped in stalled 50S ribosomal subunits, and thus maintains levels of free tRNAs and 50S ribosomes. This chain is Peptidyl-tRNA hydrolase, found in Chlorobium limicola (strain DSM 245 / NBRC 103803 / 6330).